The following is a 1330-amino-acid chain: Major capsid protein (1330 aa).

Belongs to the herpesviridae major capsid protein family. In terms of assembly, homomultimer. Makes the hexons and eleven out of twelve pentons. Interacts with triplex proteins 1/TRX1 and 2/TRX2; adjacent capsomers are linked together in groups of three by triplexes, heterotrimeric complexes composed of one molecule of TRX1 and two molecules of TRX2. Interacts with scaffold protein; this interaction allows efficient MCP transport to the host nucleus. Interacts with capsid vertex component 2/CVC2. Interacts with the small capsomere-interacting protein/SCP.

It is found in the virion. It localises to the host nucleus. In terms of biological role, self-assembles to form an icosahedral capsid with a T=16 symmetry, about 200 nm in diameter, and consisting of 150 hexons and 12 pentons (total of 162 capsomers). Hexons form the edges and faces of the capsid and are each composed of six MCP molecules. In contrast, one penton is found at each of the 12 vertices. Eleven of the pentons are MCP pentamers, while the last vertex is occupied by the portal complex. The capsid is surrounded by a layer of proteinaceous material designated the tegument which, in turn, is enclosed in an envelope of host cell-derived lipids containing virus-encoded glycoproteins. This Sus scrofa (Pig) protein is Major capsid protein.